Here is a 549-residue protein sequence, read N- to C-terminus: FERM domain-containing protein 1 (549 aa).

The tract at residues 1-40 is disordered; it reads MAVPPRGRGIDPARTNPDTFPPSGARCMEPSPERPACSQQ. Residues 54 to 369 form the FERM domain; the sequence is RDVLVLLPSR…DELELDLASR (316 aa). Disordered regions lie at residues 377–400 and 422–464; these read SSQH…YTSG and HGLH…GQSA. The span at 430–443 shows a compositional bias: low complexity; sequence SSSPRTSRSHPSTR. Over residues 444 to 462 the composition is skewed to polar residues; that stretch reads GDSQATRQEPCTQVRTRGQ.

The sequence is that of FERM domain-containing protein 1 (FRMD1) from Homo sapiens (Human).